Reading from the N-terminus, the 232-residue chain is U2 small nuclear ribonucleoprotein B'' (232 aa).

Residues 10–89 form the RRM 1 domain; it reads QTVYLRNLNE…KRMRVQYAKT (80 aa). The disordered stretch occupies residues 90–159; sequence RSDCLATEDG…QEPPAPPNNI (70 aa). Over residues 108–123 the composition is skewed to basic and acidic residues; sequence KKQEEKAAEKKRRAEE. A compositionally biased stretch (polar residues) spans 127-151; sequence SGPNAAAQSNGTGYQASRLGKTSQE. Residues 158 to 232 form the RRM 2 domain; that stretch reads NILFIQNLPA…NPMAISYAKK (75 aa).

This sequence belongs to the RRM U1 A/B'' family. Component of the spliceosome where it is associated with snRNP U2.

The protein localises to the nucleus. The protein resides in the cajal body. It localises to the nucleoplasm. Its subcellular location is the cytoplasm. Its function is as follows. Involved in nuclear pre-mRNA splicing. The polypeptide is U2 small nuclear ribonucleoprotein B'' (Oryza sativa subsp. japonica (Rice)).